Reading from the N-terminus, the 394-residue chain is Elongation factor Tu-A (394 aa).

In terms of domain architecture, tr-type G spans 10-204; it reads KPHVNVGTIG…ALDTYIPEPE (195 aa). The G1 stretch occupies residues 19 to 26; that stretch reads GHVDHGKT. Position 19 to 26 (19 to 26) interacts with GTP; it reads GHVDHGKT. Mg(2+) is bound at residue threonine 26. The interval 60–64 is G2; sequence GITIN. The tract at residues 81–84 is G3; the sequence is DCPG. GTP-binding positions include 81-85 and 136-139; these read DCPGH and NKCD. The tract at residues 136–139 is G4; the sequence is NKCD. The interval 174 to 176 is G5; it reads SAL.

This sequence belongs to the TRAFAC class translation factor GTPase superfamily. Classic translation factor GTPase family. EF-Tu/EF-1A subfamily. Monomer.

It localises to the cytoplasm. The enzyme catalyses GTP + H2O = GDP + phosphate + H(+). GTP hydrolase that promotes the GTP-dependent binding of aminoacyl-tRNA to the A-site of ribosomes during protein biosynthesis. The protein is Elongation factor Tu-A of Vibrio cholerae serotype O1 (strain ATCC 39315 / El Tor Inaba N16961).